Reading from the N-terminus, the 258-residue chain is L-fucose dehydrogenase (258 aa).

NADP(+) is bound by residues Ser17, Ile19, Arg39, His40, Glu63, Leu64, and Asn90. 5 residues coordinate beta-L-fucose: Asn94, Ser140, Lys141, Gln147, and Tyr153. NADP(+) contacts are provided by Tyr153 and Lys157. The active-site Proton acceptor is the Tyr153. Ala184 and Glu185 together coordinate beta-L-fucose. 2 residues coordinate NADP(+): Val186 and Thr188.

Belongs to the short-chain dehydrogenases/reductases (SDR) family. As to quaternary structure, homotetramer; dimer of dimers.

It carries out the reaction beta-L-fucose + NADP(+) = L-fucono-1,5-lactone + NADPH + H(+). The catalysed reaction is D-arabinose + NADP(+) = D-arabinono-1,5-lactone + NADPH + H(+). It functions in the pathway carbohydrate degradation; L-fucose degradation. Its function is as follows. L-fucose dehydrogenase involved in an L-fucose degradation pathway. Catalyzes the oxidation of L-fucose to L-fucono-1,5-lactone. Can also act on D-arabinose, with lower catalytic efficiency, and has weak activity with L-galactose and 4-deoxy-L-fucose. Shows a preference for NADP(+) over NAD(+). The chain is L-fucose dehydrogenase from Burkholderia multivorans (strain ATCC 17616 / 249).